We begin with the raw amino-acid sequence, 48 residues long: Delta-stichotoxin-Hmg4b (48 aa).

Intrachain disulfides connect Cys-3–Cys-43, Cys-5–Cys-33, and Cys-26–Cys-44.

Belongs to the sea anemone sodium channel inhibitory toxin family. Type II subfamily.

The protein resides in the secreted. The protein localises to the nematocyst. Binds specifically to voltage-gated sodium channels (Nav), thereby delaying their inactivation during signal transduction. Its toxicity is greater than that of RpII (AC P01534). The chain is Delta-stichotoxin-Hmg4b from Heteractis magnifica (Magnificent sea anemone).